The primary structure comprises 144 residues: MTEKVKKLSPRRRARECAVQTLYSWAISKNAPEEIELNFIVDQDNEMKGVDMPYFRKLFRQTVDHVEIVDSIMAPYLDRDNVELDPIECAILRLAVYELKFELDVPYKVVINEAIEVAKVFGAEESHKYINGVLDKIAPALSRK.

The protein belongs to the NusB family.

Its function is as follows. Involved in transcription antitermination. Required for transcription of ribosomal RNA (rRNA) genes. Binds specifically to the boxA antiterminator sequence of the ribosomal RNA (rrn) operons. This is Transcription antitermination protein NusB from Histophilus somni (strain 129Pt) (Haemophilus somnus).